A 156-amino-acid polypeptide reads, in one-letter code: Histone acetyltransferase HPA2 (156 aa).

An N-acetyltransferase domain is found at 9-156 (ITVRFVTEND…PKILYKRKGY (148 aa)). 93–106 (LYVDENSRVKGAGG) contributes to the acetyl-CoA binding site.

Belongs to the acetyltransferase family. GNAT subfamily. In terms of assembly, forms homodimers in the absence, and homotetramers in the presence of acetyl-CoA. In terms of processing, autoacetylates in an intermolecular reaction.

The catalysed reaction is L-lysyl-[protein] + acetyl-CoA = N(6)-acetyl-L-lysyl-[protein] + CoA + H(+). Functionally, N-acetyltransferase that acetylates histone H3 at 'Lys-14' and histone H4 at 'Lys-5' and 'Lys-12'. Also acetylates polyamines like putrescine, spermidine and spermine, and certain other small basic proteins like nuclear HMG proteins. This Saccharomyces cerevisiae (strain ATCC 204508 / S288c) (Baker's yeast) protein is Histone acetyltransferase HPA2.